Consider the following 335-residue polypeptide: GTPase Obg (335 aa).

Residues 1–158 (MFLDQITIEL…RQVELELKLI (158 aa)) enclose the Obg domain. An OBG-type G domain is found at 159–334 (ADIGLVGFPN…LNSLFTNRLS (176 aa)). Residues 165-172 (GFPNAGKS), 190-194 (FTTLQ), 215-218 (DIPG), 285-288 (NKID), and 315-317 (SGL) each bind GTP. 2 residues coordinate Mg(2+): Ser-172 and Thr-192.

This sequence belongs to the TRAFAC class OBG-HflX-like GTPase superfamily. OBG GTPase family. As to quaternary structure, monomer. Requires Mg(2+) as cofactor.

The protein resides in the cytoplasm. In terms of biological role, an essential GTPase which binds GTP, GDP and possibly (p)ppGpp with moderate affinity, with high nucleotide exchange rates and a fairly low GTP hydrolysis rate. Plays a role in control of the cell cycle, stress response, ribosome biogenesis and in those bacteria that undergo differentiation, in morphogenesis control. This Chlamydia caviae (strain ATCC VR-813 / DSM 19441 / 03DC25 / GPIC) (Chlamydophila caviae) protein is GTPase Obg.